A 124-amino-acid polypeptide reads, in one-letter code: Chorion class high-cysteine HCA protein 12 (124 aa).

The first 21 residues, 1-21 (MFTFALLLLCVQGCLIQNVYG), serve as a signal peptide directing secretion. Positions 22 to 35 (QCCGCGCGGGCGCG) are left arm. A central domain region spans residues 36-83 (CYGGEGDGNVNVCGELPVCGETLVCGRVPICGGVCFKGPACASGCVSI). Positions 84 to 124 (CGRCCGCGCGGCGGCGCGCGGCGCGCGGCGGCGCGRRCCCC) are right arm (Gly- and Cys-rich tandem repeats).

Belongs to the chorion protein family.

This protein is one of many from the eggshell of the silk moth. The sequence is that of Chorion class high-cysteine HCA protein 12 from Bombyx mori (Silk moth).